Reading from the N-terminus, the 901-residue chain is Protein translocase subunit SecA (901 aa).

ATP contacts are provided by residues Gln-87, 105 to 109 (GEGKT), and Asp-512. Residues Cys-885, Cys-887, Cys-896, and His-897 each contribute to the Zn(2+) site.

It belongs to the SecA family. In terms of assembly, monomer and homodimer. Part of the essential Sec protein translocation apparatus which comprises SecA, SecYEG and auxiliary proteins SecDF-YajC and YidC. Zn(2+) serves as cofactor.

Its subcellular location is the cell inner membrane. It is found in the cytoplasm. It carries out the reaction ATP + H2O + cellular proteinSide 1 = ADP + phosphate + cellular proteinSide 2.. In terms of biological role, part of the Sec protein translocase complex. Interacts with the SecYEG preprotein conducting channel. Has a central role in coupling the hydrolysis of ATP to the transfer of proteins into and across the cell membrane, serving both as a receptor for the preprotein-SecB complex and as an ATP-driven molecular motor driving the stepwise translocation of polypeptide chains across the membrane. This chain is Protein translocase subunit SecA, found in Salmonella agona (strain SL483).